The chain runs to 467 residues: Probable citrate synthase 1, mitochondrial (467 aa).

Residues H303, H349, and D404 contribute to the active site.

It belongs to the citrate synthase family. As to quaternary structure, homodimer.

It is found in the mitochondrion matrix. It carries out the reaction oxaloacetate + acetyl-CoA + H2O = citrate + CoA + H(+). It participates in carbohydrate metabolism; tricarboxylic acid cycle; isocitrate from oxaloacetate: step 1/2. The polypeptide is Probable citrate synthase 1, mitochondrial (Aedes aegypti (Yellowfever mosquito)).